The following is a 116-amino-acid chain: Thioredoxin (116 aa).

The 112-residue stretch at 2–113 folds into the Thioredoxin domain; the sequence is TDSEKSATIK…LLRELSDVVP (112 aa). The cysteines at positions 37 and 40 are disulfide-linked.

This sequence belongs to the thioredoxin family.

Functionally, participates in various redox reactions through the reversible oxidation of its active center dithiol to a disulfide and catalyzes dithiol-disulfide exchange reactions. This chain is Thioredoxin (trxA), found in Mycobacterium bovis (strain ATCC BAA-935 / AF2122/97).